The chain runs to 159 residues: Fimbrial protein MyfA (159 aa).

The signal sequence occupies residues 1–29; the sequence is MNMKKFVKKPLAIAVLMLASGGMVNMVHA.

As to quaternary structure, forms a homomer composed of subunits assembled in a large structure resistant to proteases and chaotropic agents.

The protein resides in the fimbrium. In terms of biological role, major pilus subunit. Expressed only in pathogenic serotypes, it is part of myf, a probable virulence factor. The polypeptide is Fimbrial protein MyfA (myfA) (Yersinia enterocolitica).